A 217-amino-acid polypeptide reads, in one-letter code: Probable transaldolase (217 aa).

The Schiff-base intermediate with substrate role is filled by lysine 83.

The protein belongs to the transaldolase family. Type 3B subfamily.

It is found in the cytoplasm. It catalyses the reaction D-sedoheptulose 7-phosphate + D-glyceraldehyde 3-phosphate = D-erythrose 4-phosphate + beta-D-fructose 6-phosphate. It functions in the pathway carbohydrate degradation; pentose phosphate pathway; D-glyceraldehyde 3-phosphate and beta-D-fructose 6-phosphate from D-ribose 5-phosphate and D-xylulose 5-phosphate (non-oxidative stage): step 2/3. In terms of biological role, transaldolase is important for the balance of metabolites in the pentose-phosphate pathway. The chain is Probable transaldolase from Brucella abortus (strain S19).